The following is a 382-amino-acid chain: Galactokinase (382 aa).

34-37 (EHTD) lines the substrate pocket. 124–130 (GAGLSSS) provides a ligand contact to ATP. Mg(2+) contacts are provided by serine 130 and glutamate 162. The active-site Proton acceptor is aspartate 174. Substrate is bound at residue tyrosine 223.

This sequence belongs to the GHMP kinase family. GalK subfamily.

The protein localises to the cytoplasm. It catalyses the reaction alpha-D-galactose + ATP = alpha-D-galactose 1-phosphate + ADP + H(+). It participates in carbohydrate metabolism; galactose metabolism. In terms of biological role, catalyzes the transfer of the gamma-phosphate of ATP to D-galactose to form alpha-D-galactose-1-phosphate (Gal-1-P). The protein is Galactokinase of Escherichia coli O81 (strain ED1a).